The following is a 309-amino-acid chain: UDP-N-acetylenolpyruvoylglucosamine reductase (309 aa).

Residues 24 to 187 (RVGGPADWLF…TKAVFEAPRG (164 aa)) enclose the FAD-binding PCMH-type domain. R167 is an active-site residue. Positions 200–213 (LARRDATQPTKERS) are enriched in basic and acidic residues. Positions 200-230 (LARRDATQPTKERSAGSTFRNPAGFSSTGRS) are disordered. Residues 214–228 (AGSTFRNPAGFSSTG) are compositionally biased toward polar residues. S216 (proton donor) is an active-site residue. E298 is a catalytic residue.

Belongs to the MurB family. It depends on FAD as a cofactor.

Its subcellular location is the cytoplasm. The enzyme catalyses UDP-N-acetyl-alpha-D-muramate + NADP(+) = UDP-N-acetyl-3-O-(1-carboxyvinyl)-alpha-D-glucosamine + NADPH + H(+). Its pathway is cell wall biogenesis; peptidoglycan biosynthesis. Functionally, cell wall formation. The polypeptide is UDP-N-acetylenolpyruvoylglucosamine reductase (Roseobacter denitrificans (strain ATCC 33942 / OCh 114) (Erythrobacter sp. (strain OCh 114))).